The sequence spans 159 residues: Eukaryotic translation initiation factor 5A-5 (159 aa).

Positions Met1 to Ala12 are enriched in basic and acidic residues. Positions Met1–Gln23 are disordered. The residue at position 52 (Lys52) is a Hypusine.

This sequence belongs to the eIF-5A family. Lys-52 undergoes hypusination, a unique post-translational modification that consists in the addition of a butylamino group from spermidine to lysine side chain, leading to the formation of the unusual amino acid hypusine. eIF-5As are the only known proteins to undergo this modification, which is essential for their function.

Its function is as follows. Translation factor that promotes translation elongation and termination, particularly upon ribosome stalling at specific amino acid sequence contexts. Binds between the exit (E) and peptidyl (P) site of the ribosome and promotes rescue of stalled ribosome: specifically required for efficient translation of polyproline-containing peptides as well as other motifs that stall the ribosome. Acts as a ribosome quality control (RQC) cofactor by joining the RQC complex to facilitate peptidyl transfer during CAT tailing step. This is Eukaryotic translation initiation factor 5A-5 (EIF5A5) from Solanum tuberosum (Potato).